The sequence spans 49 residues: Small, acid-soluble spore protein K (49 aa).

Positions 1 to 49 (MRNKSRGFPNMNNNKFEGEPRAKDDFASKRPDGSTNTHPQERMRASGKR) are disordered. 2 stretches are compositionally biased toward basic and acidic residues: residues 16–32 (FEGE…KRPD) and 39–49 (PQERMRASGKR).

The protein belongs to the SspK family.

The protein resides in the spore core. This chain is Small, acid-soluble spore protein K, found in Bacillus licheniformis (strain ATCC 14580 / DSM 13 / JCM 2505 / CCUG 7422 / NBRC 12200 / NCIMB 9375 / NCTC 10341 / NRRL NRS-1264 / Gibson 46).